We begin with the raw amino-acid sequence, 323 residues long: tRNA dimethylallyltransferase (323 aa).

Residue 12 to 19 coordinates ATP; that stretch reads GPTASGKT. Substrate is bound at residue 14-19; sequence TASGKT. Interaction with substrate tRNA regions lie at residues 37 to 40 and 161 to 165; these read DSAL and QRLVR.

It belongs to the IPP transferase family. As to quaternary structure, monomer. It depends on Mg(2+) as a cofactor.

The enzyme catalyses adenosine(37) in tRNA + dimethylallyl diphosphate = N(6)-dimethylallyladenosine(37) in tRNA + diphosphate. In terms of biological role, catalyzes the transfer of a dimethylallyl group onto the adenine at position 37 in tRNAs that read codons beginning with uridine, leading to the formation of N6-(dimethylallyl)adenosine (i(6)A). The protein is tRNA dimethylallyltransferase of Azotobacter vinelandii (strain DJ / ATCC BAA-1303).